A 398-amino-acid polypeptide reads, in one-letter code: 4-hydroxy-3-methylbut-2-enyl diphosphate reductase (398 aa).

Residue Cys-66 participates in [4Fe-4S] cluster binding. Residue His-96 participates in (2E)-4-hydroxy-3-methylbut-2-enyl diphosphate binding. His-96 is a dimethylallyl diphosphate binding site. His-96 is an isopentenyl diphosphate binding site. Cys-157 lines the [4Fe-4S] cluster pocket. His-185 is a binding site for (2E)-4-hydroxy-3-methylbut-2-enyl diphosphate. His-185 contributes to the dimethylallyl diphosphate binding site. His-185 lines the isopentenyl diphosphate pocket. Glu-187 (proton donor) is an active-site residue. Thr-250 contributes to the (2E)-4-hydroxy-3-methylbut-2-enyl diphosphate binding site. Cys-288 contributes to the [4Fe-4S] cluster binding site. (2E)-4-hydroxy-3-methylbut-2-enyl diphosphate contacts are provided by Ser-317, Ser-318, Asn-319, and Ser-380. The dimethylallyl diphosphate site is built by Ser-317, Ser-318, Asn-319, and Ser-380. Isopentenyl diphosphate contacts are provided by Ser-317, Ser-318, Asn-319, and Ser-380.

It belongs to the IspH family. Requires [4Fe-4S] cluster as cofactor.

The catalysed reaction is isopentenyl diphosphate + 2 oxidized [2Fe-2S]-[ferredoxin] + H2O = (2E)-4-hydroxy-3-methylbut-2-enyl diphosphate + 2 reduced [2Fe-2S]-[ferredoxin] + 2 H(+). The enzyme catalyses dimethylallyl diphosphate + 2 oxidized [2Fe-2S]-[ferredoxin] + H2O = (2E)-4-hydroxy-3-methylbut-2-enyl diphosphate + 2 reduced [2Fe-2S]-[ferredoxin] + 2 H(+). Its pathway is isoprenoid biosynthesis; dimethylallyl diphosphate biosynthesis; dimethylallyl diphosphate from (2E)-4-hydroxy-3-methylbutenyl diphosphate: step 1/1. It functions in the pathway isoprenoid biosynthesis; isopentenyl diphosphate biosynthesis via DXP pathway; isopentenyl diphosphate from 1-deoxy-D-xylulose 5-phosphate: step 6/6. Catalyzes the conversion of 1-hydroxy-2-methyl-2-(E)-butenyl 4-diphosphate (HMBPP) into a mixture of isopentenyl diphosphate (IPP) and dimethylallyl diphosphate (DMAPP). Acts in the terminal step of the DOXP/MEP pathway for isoprenoid precursor biosynthesis. This chain is 4-hydroxy-3-methylbut-2-enyl diphosphate reductase, found in Prochlorococcus marinus (strain MIT 9515).